We begin with the raw amino-acid sequence, 205 residues long: GTP cyclohydrolase-2 (205 aa).

49 to 53 is a binding site for GTP; it reads RLHSE. Zn(2+)-binding residues include C54, C65, and C67. Residues Q70, 92 to 94, and T114 contribute to the GTP site; that span reads EGR. The active-site Proton acceptor is the D126. R128 (nucleophile) is an active-site residue. 2 residues coordinate GTP: T149 and K154.

Belongs to the GTP cyclohydrolase II family. Zn(2+) is required as a cofactor.

It catalyses the reaction GTP + 4 H2O = 2,5-diamino-6-hydroxy-4-(5-phosphoribosylamino)-pyrimidine + formate + 2 phosphate + 3 H(+). It functions in the pathway cofactor biosynthesis; riboflavin biosynthesis; 5-amino-6-(D-ribitylamino)uracil from GTP: step 1/4. Its function is as follows. Catalyzes the conversion of GTP to 2,5-diamino-6-ribosylamino-4(3H)-pyrimidinone 5'-phosphate (DARP), formate and pyrophosphate. This Pseudomonas entomophila (strain L48) protein is GTP cyclohydrolase-2.